Consider the following 821-residue polypeptide: Frameshifted structural polyprotein (821 aa).

Positions 1-106 are disordered; it reads MNRGFFNMLG…KPKPGKRQRM (106 aa). Over residues 38–49 the composition is skewed to polar residues; it reads LASQIQQLTTAV. The span at 67 to 106 shows a compositional bias: basic residues; sequence PPPRQKKQAPKQPPKPKKPKTQEKKKKQPAKPKPGKRQRM. The ribosome-binding stretch occupies residues 93 to 101; it reads KQPAKPKPG. The Peptidase S3 domain occupies 114–264; that stretch reads RLFDVKNEDG…KTTPEGTEEW (151 aa). Catalysis depends on charge relay system residues His141, Asp163, and Ser215. The segment at 265-279 is functions as an uncleaved signal peptide for the precursor of protein E3/E2; sequence SAAPLVTAMCLLGNV. N-linked (GlcNAc...) asparagine; by host glycosylation occurs at Asn278. Cys283 and Cys289 form a disulfide bridge. 2 N-linked (GlcNAc...) asparagine; by host glycosylation sites follow: Asn524 and Asn646. The helical transmembrane segment at 696–716 threads the bilayer; it reads ILAVASATVAMMIGVTVAVLC. S-palmitoyl cysteine; by host attachment occurs at residues Cys724, Cys744, and Cys745. 2 consecutive transmembrane segments (helical) span residues 726 to 746 and 764 to 784; these read TPYA…LCCV and NSQP…IVLM.

It belongs to the alphavirus frameshifted structural polyprotein family. In terms of assembly, homomultimer. Interacts with host karyopherin KPNA4; this interaction allows the nuclear import of the viral capsid protein. Interacts with spike glycoprotein E2. Interacts with host IRAK1; the interaction leads to inhibition of IRAK1-dependent signaling. As to quaternary structure, the precursor of protein E3/E2 and E1 form a heterodimer shortly after synthesis. Processing of the precursor of protein E3/E2 into E2 and E3 results in a heterodimer of the spike glycoproteins E2 and E1. Spike at virion surface are constituted of three E2-E1 heterodimers. Specific enzymatic cleavages in vivo yield mature proteins. Capsid protein is auto-cleaved during polyprotein translation, unmasking a signal peptide at the N-terminus of the precursor of E3/E2. The remaining polyprotein is then targeted to the host endoplasmic reticulum, where host signal peptidase cleaves it into pE2 and TF. pE2 is further processed to mature E3 and E2 by host furin in trans-Golgi vesicle. Post-translationally, palmitoylated via thioester bonds. These palmitoylations may induce disruption of the C-terminus transmembrane. This would result in the reorientation of E2 C-terminus from lumenal to cytoplasmic side. In terms of processing, palmitoylated via thioester bonds.

Its subcellular location is the virion. It localises to the host cytoplasm. It is found in the host cell membrane. The protein resides in the host nucleus. The protein localises to the virion membrane. It catalyses the reaction Autocatalytic release of the core protein from the N-terminus of the togavirus structural polyprotein by hydrolysis of a -Trp-|-Ser- bond.. In terms of biological role, forms an icosahedral capsid with a T=4 symmetry composed of 240 copies of the capsid protein surrounded by a lipid membrane through which penetrate 80 spikes composed of trimers of E1-E2 heterodimers. The capsid protein binds to the viral RNA genome at a site adjacent to a ribosome binding site for viral genome translation following genome release. Possesses a protease activity that results in its autocatalytic cleavage from the nascent structural protein. Following its self-cleavage, the capsid protein transiently associates with ribosomes, and within several minutes the protein binds to viral RNA and rapidly assembles into icosahedric core particles. The resulting nucleocapsid eventually associates with the cytoplasmic domain of the spike glycoprotein E2 at the cell membrane, leading to budding and formation of mature virions. In case of infection, new virions attach to target cells and after clathrin-mediated endocytosis their membrane fuses with the host endosomal membrane. This leads to the release of the nucleocapsid into the cytoplasm, followed by an uncoating event necessary for the genomic RNA to become accessible. The uncoating might be triggered by the interaction of capsid proteins with ribosomes. Binding of ribosomes would release the genomic RNA since the same region is genomic RNA-binding and ribosome-binding. Specifically inhibits interleukin-1 receptor-associated kinase 1/IRAK1-dependent signaling during viral entry, representing a means by which the alphaviruses may evade innate immune detection and activation prior to viral gene expression. Provides the signal sequence for the translocation of the precursor of protein E3/E2 to the host endoplasmic reticulum. Furin-cleaved E3 remains associated with spike glycoprotein E1 and mediates pH protection of the latter during the transport via the secretory pathway. After virion release from the host cell, the assembly protein E3 is gradually released in the extracellular space. Its function is as follows. Plays an essential role in viral attachment to target host cell, by binding to the cell receptor. Synthesized as a pE2 precursor which is processed by furin at the cell membrane just before virion budding, giving rise to E2-E1 heterodimer. The pE2-E1 heterodimer is stable, whereas E2-E1 is unstable and dissociate at low pH. pE2 is processed at the last step, presumably to avoid E1 fusion activation before its final export to cell surface. E2 C-terminus contains a transitory transmembrane that would be disrupted by palmitoylation, resulting in reorientation of the C-terminal tail from lumenal to cytoplasmic side. This step is critical since E2 C-terminus is involved in budding by interacting with capsid proteins. This release of E2 C-terminus in cytoplasm occurs lately in protein export, and precludes premature assembly of particles at the endoplasmic reticulum membrane. Functionally, plays a role in viral assembly and release. The protein is Frameshifted structural polyprotein of Sindbis virus (SINV).